Here is an 893-residue protein sequence, read N- to C-terminus: Serine/threonine-protein kinase/endoribonuclease IRE1 (893 aa).

Positions 1 to 19 (MRSLRRVLLQLVLLAGVAF) are cleaved as a signal peptide. Residues 20–379 (RGVRFDDAAD…NSVTKFSYRW (360 aa)) lie on the Lumenal side of the membrane. N105, N158, N259, and N351 each carry an N-linked (GlcNAc...) asparagine glycan. The chain crosses the membrane as a helical span at residues 380–397 (LFPTFLMLLIMACLVKLA). At 398 to 893 (DASKYCRQFV…FSKYFLGSSA (496 aa)) the chain is on the cytoplasmic side. The interval 451–478 (ASDKEGNGTGGSTEAQSNKAHDSTNVEL) is disordered. The region spanning 491–759 (CVYSKEIGKG…AVYVMHHPFF (269 aa)) is the Protein kinase domain. Residues 497–505 (IGKGSNGTV) and K519 each bind ATP. The active-site Proton acceptor is the D625. A KEN domain is found at 762-890 (PELCLSFLRD…EEAFSKYFLG (129 aa)).

The protein belongs to the protein kinase superfamily. Ser/Thr protein kinase family. As to quaternary structure, homodimer; disulfide-linked. Dimer formation is driven by hydrophobic interactions within the N-terminal luminal domains and stabilized by disulfide bridges. Autophosphorylated. In terms of tissue distribution, expressed in roots, nodes, internodes, leaf sheaths, leaf blades, young ears and mature ears.

It localises to the endoplasmic reticulum membrane. The enzyme catalyses L-seryl-[protein] + ATP = O-phospho-L-seryl-[protein] + ADP + H(+). It carries out the reaction L-threonyl-[protein] + ATP = O-phospho-L-threonyl-[protein] + ADP + H(+). Involved in endoplasmic reticulum (ER) stress response. Senses unfolded proteins in the lumen of the ER via its N-terminal domain which leads to enzyme auto-activation. The active endoribonuclease domain splices bZIP50 mRNA to generate a new C-terminus, converting it into a potent unfolded-protein response (UPR) transcriptional activator, which then induces transcription of UPR target genes, such as luminal-binding protein (BiP) chaperones. This chain is Serine/threonine-protein kinase/endoribonuclease IRE1, found in Oryza sativa subsp. japonica (Rice).